A 489-amino-acid polypeptide reads, in one-letter code: 3-octaprenyl-4-hydroxybenzoate carboxy-lyase (489 aa).

Asparagine 172 is a Mn(2+) binding site. Prenylated FMN contacts are provided by residues 175-177, 189-191, and 194-195; these read IYR, RWL, and RG. Glutamate 238 contacts Mn(2+). Residue aspartate 287 is the Proton donor of the active site.

The protein belongs to the UbiD family. As to quaternary structure, homohexamer. The cofactor is prenylated FMN. It depends on Mn(2+) as a cofactor.

Its subcellular location is the cell membrane. It catalyses the reaction a 4-hydroxy-3-(all-trans-polyprenyl)benzoate + H(+) = a 2-(all-trans-polyprenyl)phenol + CO2. It functions in the pathway cofactor biosynthesis; ubiquinone biosynthesis. In terms of biological role, catalyzes the decarboxylation of 3-octaprenyl-4-hydroxy benzoate to 2-octaprenylphenol, an intermediate step in ubiquinone biosynthesis. This Glaesserella parasuis serovar 5 (strain SH0165) (Haemophilus parasuis) protein is 3-octaprenyl-4-hydroxybenzoate carboxy-lyase.